Here is a 164-residue protein sequence, read N- to C-terminus: Crossover junction endodeoxyribonuclease RuvC (164 aa).

Active-site residues include aspartate 7, glutamate 67, and aspartate 139. Residues aspartate 7, glutamate 67, and aspartate 139 each coordinate Mg(2+).

Belongs to the RuvC family. Homodimer which binds Holliday junction (HJ) DNA. The HJ becomes 2-fold symmetrical on binding to RuvC with unstacked arms; it has a different conformation from HJ DNA in complex with RuvA. In the full resolvosome a probable DNA-RuvA(4)-RuvB(12)-RuvC(2) complex forms which resolves the HJ. It depends on Mg(2+) as a cofactor.

It is found in the cytoplasm. It carries out the reaction Endonucleolytic cleavage at a junction such as a reciprocal single-stranded crossover between two homologous DNA duplexes (Holliday junction).. Functionally, the RuvA-RuvB-RuvC complex processes Holliday junction (HJ) DNA during genetic recombination and DNA repair. Endonuclease that resolves HJ intermediates. Cleaves cruciform DNA by making single-stranded nicks across the HJ at symmetrical positions within the homologous arms, yielding a 5'-phosphate and a 3'-hydroxyl group; requires a central core of homology in the junction. The consensus cleavage sequence is 5'-(A/T)TT(C/G)-3'. Cleavage occurs on the 3'-side of the TT dinucleotide at the point of strand exchange. HJ branch migration catalyzed by RuvA-RuvB allows RuvC to scan DNA until it finds its consensus sequence, where it cleaves and resolves the cruciform DNA. The protein is Crossover junction endodeoxyribonuclease RuvC of Citrifermentans bemidjiense (strain ATCC BAA-1014 / DSM 16622 / JCM 12645 / Bem) (Geobacter bemidjiensis).